Here is a 298-residue protein sequence, read N- to C-terminus: DegV domain-containing protein UU535 (298 aa).

A DegV domain is found at phenylalanine 5–alanine 287. Positions 65 and 96 each coordinate hexadecanoate.

Functionally, may bind long-chain fatty acids, such as palmitate, and may play a role in lipid transport or fatty acid metabolism. This is DegV domain-containing protein UU535 from Ureaplasma parvum serovar 3 (strain ATCC 700970).